We begin with the raw amino-acid sequence, 247 residues long: Probable transcriptional regulatory protein YPK_2146 (247 aa).

Belongs to the TACO1 family.

It is found in the cytoplasm. This chain is Probable transcriptional regulatory protein YPK_2146, found in Yersinia pseudotuberculosis serotype O:3 (strain YPIII).